We begin with the raw amino-acid sequence, 892 residues long: Alanine--tRNA ligase (892 aa).

Residues His-574, His-578, Cys-676, and His-680 each contribute to the Zn(2+) site.

The protein belongs to the class-II aminoacyl-tRNA synthetase family. Requires Zn(2+) as cofactor.

The protein resides in the cytoplasm. It carries out the reaction tRNA(Ala) + L-alanine + ATP = L-alanyl-tRNA(Ala) + AMP + diphosphate. Catalyzes the attachment of alanine to tRNA(Ala) in a two-step reaction: alanine is first activated by ATP to form Ala-AMP and then transferred to the acceptor end of tRNA(Ala). Also edits incorrectly charged Ser-tRNA(Ala) and Gly-tRNA(Ala) via its editing domain. This is Alanine--tRNA ligase from Prochlorococcus marinus (strain MIT 9303).